We begin with the raw amino-acid sequence, 407 residues long: F-box protein SKIP23 (407 aa).

One can recognise an F-box domain in the interval 2–50 (VDWSTLPKDLLDLISKSLESSFDLIQFRSVCSSWRSAAEPKSPLPTHHL).

Part of a SCF (ASK-cullin-F-box) protein ligase complex. Interacts with SKP1A/ASK1.

The protein resides in the nucleus. Its pathway is protein modification; protein ubiquitination. In terms of biological role, component of SCF(ASK-cullin-F-box) E3 ubiquitin ligase complexes, which may mediate the ubiquitination and subsequent proteasomal degradation of target proteins. This chain is F-box protein SKIP23 (SKIP23), found in Arabidopsis thaliana (Mouse-ear cress).